Reading from the N-terminus, the 89-residue chain is Small ribosomal subunit protein uS15 (89 aa).

Belongs to the universal ribosomal protein uS15 family. Part of the 30S ribosomal subunit. Forms a bridge to the 50S subunit in the 70S ribosome, contacting the 23S rRNA.

Its function is as follows. One of the primary rRNA binding proteins, it binds directly to 16S rRNA where it helps nucleate assembly of the platform of the 30S subunit by binding and bridging several RNA helices of the 16S rRNA. In terms of biological role, forms an intersubunit bridge (bridge B4) with the 23S rRNA of the 50S subunit in the ribosome. The sequence is that of Small ribosomal subunit protein uS15 from Desulforudis audaxviator (strain MP104C).